A 339-amino-acid chain; its full sequence is DNA-directed RNA polymerase subunit alpha (339 aa).

Positions 1–235 are alpha N-terminal domain (alpha-NTD); sequence MTIQKNWQEL…DQLNVFVNFE (235 aa). Positions 251-339 are alpha C-terminal domain (alpha-CTD); that stretch reads FNPAFLKKVD…ELAKRFEDHY (89 aa).

This sequence belongs to the RNA polymerase alpha chain family. In terms of assembly, homodimer. The RNAP catalytic core consists of 2 alpha, 1 beta, 1 beta' and 1 omega subunit. When a sigma factor is associated with the core the holoenzyme is formed, which can initiate transcription.

It carries out the reaction RNA(n) + a ribonucleoside 5'-triphosphate = RNA(n+1) + diphosphate. In terms of biological role, DNA-dependent RNA polymerase catalyzes the transcription of DNA into RNA using the four ribonucleoside triphosphates as substrates. This is DNA-directed RNA polymerase subunit alpha from Rhodopseudomonas palustris (strain BisB5).